The chain runs to 285 residues: Energy-coupling factor transporter ATP-binding protein EcfA2 (285 aa).

The ABC transporter domain maps to isoleucine 3 to serine 245. Position 40–47 (glycine 40–serine 47) interacts with ATP.

This sequence belongs to the ABC transporter superfamily. Energy-coupling factor EcfA family. Forms a stable energy-coupling factor (ECF) transporter complex composed of 2 membrane-embedded substrate-binding proteins (S component), 2 ATP-binding proteins (A component) and 2 transmembrane proteins (T component).

The protein resides in the cell membrane. ATP-binding (A) component of a common energy-coupling factor (ECF) ABC-transporter complex. Unlike classic ABC transporters this ECF transporter provides the energy necessary to transport a number of different substrates. The sequence is that of Energy-coupling factor transporter ATP-binding protein EcfA2 from Lactobacillus acidophilus (strain ATCC 700396 / NCK56 / N2 / NCFM).